The sequence spans 143 residues: Flagellar assembly factor FliW (143 aa).

It belongs to the FliW family. In terms of assembly, interacts with flagellin in a 1:1 complex. Two molecules interact with each CsrA dimer; cannot interact with both flagellin and CsrA simultaneously. Has a higher affinity for CsrA than for flagellin. Interacts directly with flagellin (hag), forms a 3-way complex of Hag, FliS and FliW in which Flis and FliW do not directly interact. Interaction with Hag may occur via the C-terminus of Hag.

It localises to the cytoplasm. Functionally, acts as an anti-CsrA protein, binds CsrA and prevents it from repressing translation of its target genes, one of which is flagellin. Binds to flagellin (hag), which is implicated in polymerization, and participates in the assembly of the flagellum. An antagonist to translational regulator CsrA, it binds CsrA at an allosteric site and non-competitively inhibits CsrA binding to hag RNA. Partner switching by flagellin between FliW and CsrA provides a flagellar assembly checkpoint to tightly control the timing of flagellin synthesis. Flagellin binds to assembly factor FliW, freeing translation regulator CsrA to repress translation of the flagellin mRNA. When the flagellar hook is assembled flagellin is secreted, depleting intracellular flagellin, which frees FliW to interact with CsrA and inhibits CsrA binding to mRNA. This derepresses flagellin translation and provides protein for flagellar assembly. Once the flagellar filament is completed cytoplasmic flagellin levels rise and CsrA translation repression of flagellin reinitiates. Binds to CsrA and displaces it from hag mRNA. Binds to hag mRNA itself, but only at much higher concentrations than those required to displace CsrA. This Bacillus subtilis (strain 168) protein is Flagellar assembly factor FliW.